A 229-amino-acid chain; its full sequence is Enolase-phosphatase E1 (229 aa).

It belongs to the HAD-like hydrolase superfamily. MasA/MtnC family. Monomer. Mg(2+) is required as a cofactor.

The catalysed reaction is 5-methylsulfanyl-2,3-dioxopentyl phosphate + H2O = 1,2-dihydroxy-5-(methylsulfanyl)pent-1-en-3-one + phosphate. The protein operates within amino-acid biosynthesis; L-methionine biosynthesis via salvage pathway; L-methionine from S-methyl-5-thio-alpha-D-ribose 1-phosphate: step 3/6. It participates in amino-acid biosynthesis; L-methionine biosynthesis via salvage pathway; L-methionine from S-methyl-5-thio-alpha-D-ribose 1-phosphate: step 4/6. Its function is as follows. Bifunctional enzyme that catalyzes the enolization of 2,3-diketo-5-methylthiopentyl-1-phosphate (DK-MTP-1-P) into the intermediate 2-hydroxy-3-keto-5-methylthiopentenyl-1-phosphate (HK-MTPenyl-1-P), which is then dephosphorylated to form the acireductone 1,2-dihydroxy-3-keto-5-methylthiopentene (DHK-MTPene). This chain is Enolase-phosphatase E1, found in Pectobacterium atrosepticum (strain SCRI 1043 / ATCC BAA-672) (Erwinia carotovora subsp. atroseptica).